Consider the following 167-residue polypeptide: 16S rRNA aminocarboxypropyltransferase (167 aa).

Thr-17, Val-62, Leu-84, Tyr-99, and Ser-103 together coordinate S-adenosyl-L-methionine.

The protein belongs to the TDD superfamily. TSR3 family.

The protein resides in the cytoplasm. It catalyses the reaction an N(1)-methylpseudouridine in rRNA + S-adenosyl-L-methionine = N(1)-methyl-N(3)-[(3S)-3-amino-3-carboxypropyl]pseudouridine in rRNA + S-methyl-5'-thioadenosine + H(+). In terms of biological role, aminocarboxypropyltransferase that catalyzes the aminocarboxypropyl transfer on pseudouridine corresponding to position 914 in M.jannaschii 16S rRNA. It constitutes the last step in biosynthesis of the hypermodified N1-methyl-N3-(3-amino-3-carboxypropyl) pseudouridine (m1acp3-Psi). This is 16S rRNA aminocarboxypropyltransferase from Sulfurisphaera tokodaii (strain DSM 16993 / JCM 10545 / NBRC 100140 / 7) (Sulfolobus tokodaii).